A 542-amino-acid chain; its full sequence is CTP synthase (542 aa).

The interval 1–265 (MARYVFITGG…DSEVLSAFGI (265 aa)) is amidoligase domain. Position 13 (S13) interacts with CTP. Residue S13 coordinates UTP. Residue 14 to 19 (SLGKGI) coordinates ATP. Y54 provides a ligand contact to L-glutamine. ATP is bound at residue D71. Residues D71 and E139 each coordinate Mg(2+). CTP contacts are provided by residues 146-148 (DIE), 186-191 (KTKPTQ), and K222. UTP-binding positions include 186-191 (KTKPTQ) and K222. The 251-residue stretch at 291-541 (TIAVVGKYTG…IEAAIEQSRL (251 aa)) folds into the Glutamine amidotransferase type-1 domain. L-glutamine is bound at residue G353. The active-site Nucleophile; for glutamine hydrolysis is the C380. L-glutamine is bound by residues 381-384 (FGMQ), E404, and R469. Active-site residues include H514 and E516.

This sequence belongs to the CTP synthase family. As to quaternary structure, homotetramer.

It catalyses the reaction UTP + L-glutamine + ATP + H2O = CTP + L-glutamate + ADP + phosphate + 2 H(+). The catalysed reaction is L-glutamine + H2O = L-glutamate + NH4(+). The enzyme catalyses UTP + NH4(+) + ATP = CTP + ADP + phosphate + 2 H(+). It participates in pyrimidine metabolism; CTP biosynthesis via de novo pathway; CTP from UDP: step 2/2. Its activity is regulated as follows. Allosterically activated by GTP, when glutamine is the substrate; GTP has no effect on the reaction when ammonia is the substrate. The allosteric effector GTP functions by stabilizing the protein conformation that binds the tetrahedral intermediate(s) formed during glutamine hydrolysis. Inhibited by the product CTP, via allosteric rather than competitive inhibition. Its function is as follows. Catalyzes the ATP-dependent amination of UTP to CTP with either L-glutamine or ammonia as the source of nitrogen. Regulates intracellular CTP levels through interactions with the four ribonucleotide triphosphates. This is CTP synthase from Brucella abortus (strain 2308).